A 78-amino-acid polypeptide reads, in one-letter code: UPF0349 protein GK2958 (78 aa).

It belongs to the UPF0349 family.

In Geobacillus kaustophilus (strain HTA426), this protein is UPF0349 protein GK2958.